The following is a 498-amino-acid chain: Glycylpeptide N-tetradecanoyltransferase 2 (498 aa).

Positions 1-87 (MAEDSESAAS…QPPSKNSTIP (87 aa)) are disordered. Residues 15-32 (ELDDQDTCGIDGDNEEET) are compositionally biased toward acidic residues. Position 38 is a phosphoserine (S38). The segment covering 46–57 (KKKKKKQKRKKE) has biased composition (basic residues). Over residues 61 to 72 (SGGTKSDSASDS) the composition is skewed to polar residues. Tetradecanoyl-CoA is bound by residues H117, W122, L250, V252, S258, R260, V261, and A262.

This sequence belongs to the NMT family.

The protein localises to the cytoplasm. It is found in the membrane. It carries out the reaction N-terminal glycyl-[protein] + tetradecanoyl-CoA = N-tetradecanoylglycyl-[protein] + CoA + H(+). It catalyses the reaction N-terminal glycyl-L-lysyl-[protein] + tetradecanoyl-CoA = N-terminal glycyl-(N(6)-tetradecanoyl)-L-lysyl-[protein] + CoA + H(+). In terms of biological role, adds a myristoyl group to the N-terminal glycine residue of certain cellular and viral proteins. Also able to mediate N-terminal lysine myristoylation of proteins: catalyzes myristoylation of ARF6 on both 'Gly-2' and 'Lys-3'. Lysine myristoylation is required to maintain ARF6 on membranes during the GTPase cycle. The sequence is that of Glycylpeptide N-tetradecanoyltransferase 2 (NMT2) from Bos taurus (Bovine).